Here is a 180-residue protein sequence, read N- to C-terminus: NADH-quinone oxidoreductase subunit I (180 aa).

4Fe-4S ferredoxin-type domains lie at 50–80 (LTRN…LQKS) and 90–119 (KFFR…LMPD). Positions 60, 63, 66, 70, 99, 102, 105, and 109 each coordinate [4Fe-4S] cluster.

This sequence belongs to the complex I 23 kDa subunit family. As to quaternary structure, NDH-1 is composed of 13 different subunits. Subunits NuoA, H, J, K, L, M, N constitute the membrane sector of the complex. The cofactor is [4Fe-4S] cluster.

Its subcellular location is the cell membrane. It catalyses the reaction a quinone + NADH + 5 H(+)(in) = a quinol + NAD(+) + 4 H(+)(out). Its function is as follows. NDH-1 shuttles electrons from NADH, via FMN and iron-sulfur (Fe-S) centers, to quinones in the respiratory chain. The immediate electron acceptor for the enzyme in this species is believed to be ubiquinone. Couples the redox reaction to proton translocation (for every two electrons transferred, four hydrogen ions are translocated across the cytoplasmic membrane), and thus conserves the redox energy in a proton gradient. This is NADH-quinone oxidoreductase subunit I from Buchnera aphidicola subsp. Schizaphis graminum (strain Sg).